The primary structure comprises 123 residues: Large ribosomal subunit protein bL12 (123 aa).

The protein belongs to the bacterial ribosomal protein bL12 family. As to quaternary structure, homodimer. Part of the ribosomal stalk of the 50S ribosomal subunit. Forms a multimeric L10(L12)X complex, where L10 forms an elongated spine to which 2 to 4 L12 dimers bind in a sequential fashion. Binds GTP-bound translation factors.

Functionally, forms part of the ribosomal stalk which helps the ribosome interact with GTP-bound translation factors. Is thus essential for accurate translation. This chain is Large ribosomal subunit protein bL12, found in Marinomonas sp. (strain MWYL1).